Here is a 291-residue protein sequence, read N- to C-terminus: 4-diphosphocytidyl-2-C-methyl-D-erythritol kinase (291 aa).

The active site involves K14. 96–106 (PFGAGLGGGSS) is an ATP binding site. The active site involves D138.

Belongs to the GHMP kinase family. IspE subfamily.

The enzyme catalyses 4-CDP-2-C-methyl-D-erythritol + ATP = 4-CDP-2-C-methyl-D-erythritol 2-phosphate + ADP + H(+). It participates in isoprenoid biosynthesis; isopentenyl diphosphate biosynthesis via DXP pathway; isopentenyl diphosphate from 1-deoxy-D-xylulose 5-phosphate: step 3/6. Its function is as follows. Catalyzes the phosphorylation of the position 2 hydroxy group of 4-diphosphocytidyl-2C-methyl-D-erythritol. This chain is 4-diphosphocytidyl-2-C-methyl-D-erythritol kinase, found in Chlorobium phaeovibrioides (strain DSM 265 / 1930) (Prosthecochloris vibrioformis (strain DSM 265)).